The chain runs to 1467 residues: Neuropathy target esterase sws (1467 aa).

Topologically, residues 1–34 (MDVLEMLRASASGSYNTIFSDAWCQYVSKQITAT) are lumenal. The helical transmembrane segment at 35–55 (MYMYCAFGLMGVLFLAWFMYF) threads the bilayer. Topologically, residues 56–1467 (KRLARLRLRD…RSSTYNETKN (1412 aa)) are cytoplasmic. 174–301 (IFGHFEKPIF…IRVIQVIMIR (128 aa)) is a binding site for a nucleoside 3',5'-cyclic phosphate. Disordered stretches follow at residues 332–353 (TMSG…ANGP) and 372–416 (MGMG…SVHG). Low complexity predominate over residues 339–350 (SQTSQSSRQATA). Phosphoserine occurs at positions 450 and 459. A nucleoside 3',5'-cyclic phosphate-binding positions include 488-615 (ELGL…VVRR) and 604-731 (IVLD…LSHR). The PNPLA domain occupies 958–1124 (LVLGGGGARG…VNNLPGHLWR (167 aa)). The GXGXXG signature appears at 962 to 967 (GGGARG). The GXSXG signature appears at 989 to 993 (GVSIG). Ser991 (nucleophile) is an active-site residue. Asp1111 acts as the Proton acceptor in catalysis. Positions 1111–1113 (DGG) match the DGA/G motif. A Phosphoserine modification is found at Ser1205. The interval 1377-1467 (RKMDKSTQST…RSSTYNETKN (91 aa)) is disordered. Positions 1382 to 1393 (STQSTPPTSSRA) are enriched in polar residues. Basic and acidic residues-rich tracts occupy residues 1396-1406 (RGKEEARHMDN) and 1448-1458 (LADKDEDKENR).

This sequence belongs to the NTE family. Interacts with Pka-C3; interaction inhibits the catalytic function of Pka-C3 and the esterase activity of sws.

Its subcellular location is the endoplasmic reticulum membrane. It carries out the reaction a 1-acyl-sn-glycero-3-phosphocholine + H2O = sn-glycerol 3-phosphocholine + a fatty acid + H(+). In terms of biological role, phospholipase B that deacylates intracellular phosphatidylcholine (PtdCho), generating glycerophosphocholine (GroPtdCho). This deacylation occurs at both sn-2 and sn-1 positions of PtdCho. Its specific chemical modification by certain organophosphorus (OP) compounds leads to distal axonopathy. Plays a role in the signaling mechanism between neurons and glia that regulates glia wrapping during development of the adult brain. Essential for membrane lipid homeostasis and cell survival in both neurons and glia of the adult brain. This chain is Neuropathy target esterase sws, found in Drosophila yakuba (Fruit fly).